A 350-amino-acid polypeptide reads, in one-letter code: Phosphotriesterase-related protein (350 aa).

H22, H24, E169, H201, H230, and D298 together coordinate a divalent metal cation.

Belongs to the metallo-dependent hydrolases superfamily. Phosphotriesterase family. The cofactor is a divalent metal cation.

The sequence is that of Phosphotriesterase-related protein from Drosophila pseudoobscura pseudoobscura (Fruit fly).